The following is a 445-amino-acid chain: Glucose-6-phosphate isomerase (445 aa).

The active-site Proton donor is the E284. Residues H305 and K419 contribute to the active site.

Belongs to the GPI family.

It is found in the cytoplasm. The enzyme catalyses alpha-D-glucose 6-phosphate = beta-D-fructose 6-phosphate. It functions in the pathway carbohydrate biosynthesis; gluconeogenesis. It participates in carbohydrate degradation; glycolysis; D-glyceraldehyde 3-phosphate and glycerone phosphate from D-glucose: step 2/4. Its function is as follows. Catalyzes the reversible isomerization of glucose-6-phosphate to fructose-6-phosphate. The protein is Glucose-6-phosphate isomerase of Leptospira borgpetersenii serovar Hardjo-bovis (strain JB197).